Here is a 131-residue protein sequence, read N- to C-terminus: Transcription antitermination protein NusB (131 aa).

Belongs to the NusB family.

Its function is as follows. Involved in transcription antitermination. Required for transcription of ribosomal RNA (rRNA) genes. Binds specifically to the boxA antiterminator sequence of the ribosomal RNA (rrn) operons. The protein is Transcription antitermination protein NusB of Campylobacter concisus (strain 13826).